Reading from the N-terminus, the 408-residue chain is Putative UPF0496 protein 2 (408 aa).

A run of 2 helical transmembrane segments spans residues 224 to 244 (RIAR…AIVA) and 252 to 272 (ALVG…GAAR). A disordered region spans residues 385 to 408 (MARGLPPPSPATVTTTSEERLTSS).

This sequence belongs to the UPF0496 family.

The protein resides in the membrane. This is Putative UPF0496 protein 2 from Oryza sativa subsp. indica (Rice).